The sequence spans 1040 residues: Isoleucine--tRNA ligase (1040 aa).

The 'HIGH' region signature appears at 47-57 (PYCSGSIHLGT). The 'KMSKS' region signature appears at 605-609 (KMSKS). K608 serves as a coordination point for ATP.

This sequence belongs to the class-I aminoacyl-tRNA synthetase family. IleS type 2 subfamily. In terms of assembly, monomer. Zn(2+) serves as cofactor.

The protein localises to the cytoplasm. The catalysed reaction is tRNA(Ile) + L-isoleucine + ATP = L-isoleucyl-tRNA(Ile) + AMP + diphosphate. In terms of biological role, catalyzes the attachment of isoleucine to tRNA(Ile). As IleRS can inadvertently accommodate and process structurally similar amino acids such as valine, to avoid such errors it has two additional distinct tRNA(Ile)-dependent editing activities. One activity is designated as 'pretransfer' editing and involves the hydrolysis of activated Val-AMP. The other activity is designated 'posttransfer' editing and involves deacylation of mischarged Val-tRNA(Ile). The chain is Isoleucine--tRNA ligase from Methanococcus aeolicus (strain ATCC BAA-1280 / DSM 17508 / OCM 812 / Nankai-3).